The chain runs to 258 residues: 6-phosphogluconolactonase (258 aa).

Belongs to the glucosamine/galactosamine-6-phosphate isomerase family. 6-phosphogluconolactonase subfamily.

It catalyses the reaction 6-phospho-D-glucono-1,5-lactone + H2O = 6-phospho-D-gluconate + H(+). It functions in the pathway carbohydrate degradation; pentose phosphate pathway; D-ribulose 5-phosphate from D-glucose 6-phosphate (oxidative stage): step 2/3. Functionally, hydrolysis of 6-phosphogluconolactone to 6-phosphogluconate. This chain is 6-phosphogluconolactonase (pgl), found in Chlamydia pneumoniae (Chlamydophila pneumoniae).